Reading from the N-terminus, the 319-residue chain is Taste receptor type 2 member 39 (319 aa).

The Extracellular portion of the chain corresponds to 1–16 (MAQPSNYWKQDLLPLS). A helical membrane pass occupies residues 17 to 37 (ILILTLVATECTIGIIASGII). Topologically, residues 38 to 56 (TVVNAVSWVQKRAVSITTR) are cytoplasmic. Residues 57 to 77 (ILLLLSVSRIGLQSIILIEMT) form a helical membrane-spanning segment. The Extracellular portion of the chain corresponds to 78-97 (SSIFNFSSYNSVLYRVSRVS). The N-linked (GlcNAc...) asparagine glycan is linked to asparagine 82. Residues 98–118 (FVFLNYCSLWFAALLSFFHFV) traverse the membrane as a helical segment. Residues 119 to 137 (KIANFSYPLFFKLKWRISE) lie on the Cytoplasmic side of the membrane. A helical transmembrane segment spans residues 138–158 (LMPWLLWLSVFISFSSSMFFC). Over 159–187 (NHKYTVYNNISLSSNICNFTMELYVAEAN) the chain is Extracellular. N-linked (GlcNAc...) asparagine glycans are attached at residues asparagine 167 and asparagine 176. Residues 188–208 (VVNVAFLFSFGILPPLTMFIA) traverse the membrane as a helical segment. Residues 209 to 247 (TATLLIFSLRRHTLHMRNGDADSRNPRVEAHKQAIKETS) lie on the Cytoplasmic side of the membrane. The helical transmembrane segment at 248-268 (CFLFLYILYAAVLFLSTSNIA) threads the bilayer. Over 269 to 273 (DASLF) the chain is Extracellular. Residues 274 to 294 (WSSVLRISLPVYPAGHSVLLI) form a helical membrane-spanning segment. The Cytoplasmic segment spans residues 295-319 (QSNPGLKRTWKQLLSQIHLHLQSRY).

This sequence belongs to the G-protein coupled receptor T2R family.

The protein localises to the membrane. Functionally, putative taste receptor which may play a role in the perception of bitterness. The polypeptide is Taste receptor type 2 member 39 (Rattus norvegicus (Rat)).